We begin with the raw amino-acid sequence, 469 residues long: Light-independent protochlorophyllide reductase subunit N (469 aa).

Cysteine 24, cysteine 49, and cysteine 109 together coordinate [4Fe-4S] cluster.

This sequence belongs to the BchN/ChlN family. In terms of assembly, protochlorophyllide reductase is composed of three subunits; ChlL, ChlN and ChlB. Forms a heterotetramer of two ChlB and two ChlN subunits. It depends on [4Fe-4S] cluster as a cofactor.

The enzyme catalyses chlorophyllide a + oxidized 2[4Fe-4S]-[ferredoxin] + 2 ADP + 2 phosphate = protochlorophyllide a + reduced 2[4Fe-4S]-[ferredoxin] + 2 ATP + 2 H2O. It participates in porphyrin-containing compound metabolism; chlorophyll biosynthesis (light-independent). In terms of biological role, component of the dark-operative protochlorophyllide reductase (DPOR) that uses Mg-ATP and reduced ferredoxin to reduce ring D of protochlorophyllide (Pchlide) to form chlorophyllide a (Chlide). This reaction is light-independent. The NB-protein (ChlN-ChlB) is the catalytic component of the complex. This Gloeobacter violaceus (strain ATCC 29082 / PCC 7421) protein is Light-independent protochlorophyllide reductase subunit N.